Here is a 317-residue protein sequence, read N- to C-terminus: Ribosomal RNA small subunit methyltransferase H (317 aa).

S-adenosyl-L-methionine-binding positions include 39–41 (GGH), Asp-59, Phe-83, Asp-104, and Gln-111.

The protein belongs to the methyltransferase superfamily. RsmH family.

It localises to the cytoplasm. It carries out the reaction cytidine(1402) in 16S rRNA + S-adenosyl-L-methionine = N(4)-methylcytidine(1402) in 16S rRNA + S-adenosyl-L-homocysteine + H(+). In terms of biological role, specifically methylates the N4 position of cytidine in position 1402 (C1402) of 16S rRNA. This Paraburkholderia phytofirmans (strain DSM 17436 / LMG 22146 / PsJN) (Burkholderia phytofirmans) protein is Ribosomal RNA small subunit methyltransferase H.